We begin with the raw amino-acid sequence, 250 residues long: DNA repair protein RecO (250 aa).

It belongs to the RecO family.

In terms of biological role, involved in DNA repair and RecF pathway recombination. The sequence is that of DNA repair protein RecO from Syntrophomonas wolfei subsp. wolfei (strain DSM 2245B / Goettingen).